The primary structure comprises 816 residues: Nicotine 6-hydroxylase large subunit (816 aa).

Glutamate 745 lines the Mo-molybdopterin cytosine dinucleotide pocket.

It belongs to the xanthine dehydrogenase family. Heterotrimer composed of a large subunit (NdhL), a medium subunit (NdhM) and a small subunit (NdhS). Mo-molybdopterin cytosine dinucleotide is required as a cofactor.

Its subcellular location is the cytoplasm. It catalyses the reaction (R)-nicotine + A + H2O = (R)-6-hydroxynicotine + AH2. The enzyme catalyses (S)-nicotine + A + H2O = (S)-6-hydroxynicotine + AH2. It participates in alkaloid degradation; nicotine degradation; 6-hydroxypseudooxynicotine from nicotine (R-isomer route): step 1/2. Its pathway is alkaloid degradation; nicotine degradation; 6-hydroxypseudooxynicotine from nicotine (S-isomer route): step 1/2. With respect to regulation, nicotine dehydrogenase activity is inhibited by tungsten. In terms of biological role, component of the nicotine 6-hydroxylase, which is involved in the degradation of nicotine. Catalyzes the hydroxylation of the pyridine ring at C6 to form 6-hydroxynicotine. Can use both L-nicotine and D-nicotine. The chain is Nicotine 6-hydroxylase large subunit from Paenarthrobacter nicotinovorans (Arthrobacter nicotinovorans).